The primary structure comprises 149 residues: Calmodulin-3 (149 aa).

At Ala2 the chain carries N-acetylalanine. EF-hand domains follow at residues 8-43 (DQIA…LGQN), 44-79 (PTEA…KMKD), 81-116 (DSEE…LGEK), and 117-149 (LTDE…MMAK). Residues Asp21, Asp23, Asp25, Cys27, Glu32, Asp57, Asp59, Asn61, Thr63, Glu68, Asp94, Asp96, Asn98, and Glu105 each coordinate Ca(2+). At Lys116 the chain carries N6,N6,N6-trimethyllysine. Ca(2+)-binding residues include Asp130, Asp132, Asp134, Gln136, and Glu141.

It belongs to the calmodulin family.

In terms of biological role, calmodulin mediates the control of a large number of enzymes, ion channels and other proteins by Ca(2+). Among the enzymes to be stimulated by the calmodulin-Ca(2+) complex are a number of protein kinases and phosphatases. The protein is Calmodulin-3 (CAM3) of Oryza sativa subsp. indica (Rice).